Here is a 171-residue protein sequence, read N- to C-terminus: Squamosa promoter-binding protein 2 (171 aa).

Disordered stretches follow at residues 20 to 46 and 57 to 76; these read GDEG…VVKV and KLNL…TASG. A compositionally biased stretch (acidic residues) spans 22–40; it reads EGSDFEEEEEGEDEEEEEQ. The segment at 82 to 159 adopts an SBP-type zinc-finger fold; it reads QPCCLVENCG…AGHNERRRKS (78 aa). Zn(2+) is bound by residues C85, C90, C107, H110, C126, C129, H133, and C145. Positions 142–158 match the Bipartite nuclear localization signal motif; the sequence is KRSCRRRLAGHNERRRK. A compositionally biased stretch (basic residues) spans 149–158; that stretch reads LAGHNERRRK. Residues 149–171 are disordered; it reads LAGHNERRRKSSLESHKEGRSPR. Residues 159–171 are compositionally biased toward basic and acidic residues; the sequence is SSLESHKEGRSPR.

The protein localises to the nucleus. Functionally, probable transcriptional factor. Binds to the promoter of the SQUAMOSA gene. The sequence is that of Squamosa promoter-binding protein 2 (SBP2) from Antirrhinum majus (Garden snapdragon).